Here is a 249-residue protein sequence, read N- to C-terminus: Globin-like protein 9 (249 aa).

A disordered region spans residues 20 to 43; it reads TNKGPNGLARRGTQRGCSRSKSTR. The region spanning 52-205 is the Globin domain; sequence SLTFSQKQAL…LIDELRGGFE (154 aa). Positions 116 and 148 each coordinate heme.

Belongs to the globin family.

This is Globin-like protein 9 (glb-9) from Caenorhabditis elegans.